Reading from the N-terminus, the 453-residue chain is Exodeoxyribonuclease 7 large subunit (453 aa).

It belongs to the XseA family. As to quaternary structure, heterooligomer composed of large and small subunits.

Its subcellular location is the cytoplasm. It carries out the reaction Exonucleolytic cleavage in either 5'- to 3'- or 3'- to 5'-direction to yield nucleoside 5'-phosphates.. Functionally, bidirectionally degrades single-stranded DNA into large acid-insoluble oligonucleotides, which are then degraded further into small acid-soluble oligonucleotides. In Geobacter metallireducens (strain ATCC 53774 / DSM 7210 / GS-15), this protein is Exodeoxyribonuclease 7 large subunit.